Here is a 129-residue protein sequence, read N- to C-terminus: Large ribosomal subunit protein uL22 (129 aa).

Belongs to the universal ribosomal protein uL22 family. In terms of assembly, part of the 50S ribosomal subunit.

Functionally, this protein binds specifically to 23S rRNA; its binding is stimulated by other ribosomal proteins, e.g. L4, L17, and L20. It is important during the early stages of 50S assembly. It makes multiple contacts with different domains of the 23S rRNA in the assembled 50S subunit and ribosome. The globular domain of the protein is located near the polypeptide exit tunnel on the outside of the subunit, while an extended beta-hairpin is found that lines the wall of the exit tunnel in the center of the 70S ribosome. The protein is Large ribosomal subunit protein uL22 of Metamycoplasma hominis (strain ATCC 23114 / DSM 25592 / NBRC 14850 / NCTC 10111 / PG21) (Mycoplasma hominis).